A 377-amino-acid polypeptide reads, in one-letter code: 3-dehydroquinate synthase (377 aa).

Residues 113–117 (GVIGD), 137–138 (TT), lysine 150, lysine 159, and 177–180 (FLDT) each bind NAD(+). Residues glutamate 192, histidine 254, and histidine 273 each contribute to the Zn(2+) site.

The protein belongs to the sugar phosphate cyclases superfamily. Dehydroquinate synthase family. Co(2+) serves as cofactor. Requires Zn(2+) as cofactor. It depends on NAD(+) as a cofactor.

Its subcellular location is the cytoplasm. It carries out the reaction 7-phospho-2-dehydro-3-deoxy-D-arabino-heptonate = 3-dehydroquinate + phosphate. Its pathway is metabolic intermediate biosynthesis; chorismate biosynthesis; chorismate from D-erythrose 4-phosphate and phosphoenolpyruvate: step 2/7. In terms of biological role, catalyzes the conversion of 3-deoxy-D-arabino-heptulosonate 7-phosphate (DAHP) to dehydroquinate (DHQ). The chain is 3-dehydroquinate synthase from Bartonella quintana (strain Toulouse) (Rochalimaea quintana).